The following is a 476-amino-acid chain: NADP-dependent glyceraldehyde-3-phosphate dehydrogenase (476 aa).

Arg103 contributes to the substrate binding site. Ser151 contacts NADP(+). Substrate is bound at residue 154-155 (NY). NADP(+) contacts are provided by residues Lys177, Thr180, Asp215, and 230-251 (GSTP…MLEL). Catalysis depends on residues Glu250 and Cys284. Substrate is bound at residue 283-285 (RCT). Residue Glu377 participates in NADP(+) binding. Position 437 (Arg437) interacts with substrate.

It belongs to the aldehyde dehydrogenase family. In terms of assembly, homotetramer.

It carries out the reaction D-glyceraldehyde 3-phosphate + NADP(+) + H2O = (2R)-3-phosphoglycerate + NADPH + 2 H(+). Catalyzes the irreversible NADP-dependent oxidation of glyceraldehyde-3-phosphate to 3-phosphoglycerate. Is not able to use NAD instead of NADP. May play an important role in NADPH production in S.equinus. The sequence is that of NADP-dependent glyceraldehyde-3-phosphate dehydrogenase (gapN) from Streptococcus equinus (Streptococcus bovis).